The following is an 88-amino-acid chain: UPF0297 protein BLi02868/BL02032 (88 aa).

The protein belongs to the UPF0297 family.

The polypeptide is UPF0297 protein BLi02868/BL02032 (Bacillus licheniformis (strain ATCC 14580 / DSM 13 / JCM 2505 / CCUG 7422 / NBRC 12200 / NCIMB 9375 / NCTC 10341 / NRRL NRS-1264 / Gibson 46)).